Here is a 111-residue protein sequence, read N- to C-terminus: Glutaredoxin-C2 (111 aa).

The Glutaredoxin domain maps to 3 to 103 (MQKAKEIVNS…PLLTEAGAIA (101 aa)). A disulfide bridge connects residues C23 and C26.

This sequence belongs to the glutaredoxin family. CPYC subfamily.

It is found in the cytoplasm. Has a glutathione-disulfide oxidoreductase activity in the presence of NADPH and glutathione reductase. Reduces low molecular weight disulfides and proteins. This chain is Glutaredoxin-C2 (GRXC2), found in Arabidopsis thaliana (Mouse-ear cress).